A 292-amino-acid polypeptide reads, in one-letter code: MINTWPSPAKINLFLYVTGIRSDGYHYIQSLFQFLNYGDTLTIIPNTKGTIELFTESNSLVNIKNSIITAAELLKEKALHSLGKKTSHFGAKIFLNKKIPIGSGLGGGSSNAATTLVVLNNLWKTKFTLQELAELSLKIGSDIPAFIMGKTTIVEGIGEILYPIHRKEKWYLIVYPNISISTKNIFSIYSIKKNTIKKPIDFLLRSRFHNDFENVIKKKFKKIKQLISMLSLYAPSRITGTGSCIFAEFNDKKSAQKIHSLLPHNVQGTIVKSVNVSPLHHAFYKKNINLFN.

Lysine 10 is a catalytic residue. Residue 100–110 (PIGSGLGGGSS) coordinates ATP. Residue aspartate 142 is part of the active site.

Belongs to the GHMP kinase family. IspE subfamily. As to quaternary structure, homodimer.

The catalysed reaction is 4-CDP-2-C-methyl-D-erythritol + ATP = 4-CDP-2-C-methyl-D-erythritol 2-phosphate + ADP + H(+). The protein operates within isoprenoid biosynthesis; isopentenyl diphosphate biosynthesis via DXP pathway; isopentenyl diphosphate from 1-deoxy-D-xylulose 5-phosphate: step 3/6. Functionally, catalyzes the phosphorylation of the position 2 hydroxy group of 4-diphosphocytidyl-2C-methyl-D-erythritol. The sequence is that of 4-diphosphocytidyl-2-C-methyl-D-erythritol kinase from Buchnera aphidicola subsp. Schizaphis graminum (strain Sg).